A 171-amino-acid chain; its full sequence is Sorcin (171 aa).

4 EF-hand domains span residues 3 to 38 (MDTNSLRHIFSRVDADKSGSISANELQTSLSNGLGT), 40 to 69 (LNIRTVQLMVAMFDRDMNGTINFNEFLGLF), 70 to 105 (KYVQDWQTCFRRYDRDNSGSIDLNEFSNALISFGYH), and 106 to 140 (LSPQFVNLMMRRFDRNRGSIAFDDFIYACVCLQTL). Ca(2+) is bound by residues Asp-16, Asp-18, Ser-20, Ser-22, Glu-27, Asp-53, Asp-55, Asn-57, Thr-59, Glu-64, Asp-83, Asp-85, Ser-87, Ser-89, and Glu-94.

It is found in the cytoplasm. In terms of biological role, calcium-binding protein. The polypeptide is Sorcin (Schistosoma japonicum (Blood fluke)).